Reading from the N-terminus, the 108-residue chain is Small ribosomal subunit protein uS17 (108 aa).

It belongs to the universal ribosomal protein uS17 family. In terms of assembly, part of the 30S ribosomal subunit.

One of the primary rRNA binding proteins, it binds specifically to the 5'-end of 16S ribosomal RNA. This chain is Small ribosomal subunit protein uS17, found in Methanoregula boonei (strain DSM 21154 / JCM 14090 / 6A8).